The chain runs to 848 residues: F-BAR domain only protein 2 (848 aa).

Positions 4–250 (PYFLENFWGN…NMENTSVESL (247 aa)) constitute an F-BAR domain. Residues 87–114 (HMELVRKLQELIKEVQKYVDEQAKNHKK) adopt a coiled-coil conformation. Disordered stretches follow at residues 292 to 316 (IPGRRKEKDTDSTESTEVEAVNASN) and 404 to 526 (LSPT…RAES). A phosphoserine mark is found at Ser-405 and Ser-417. Positions 445-460 (PFGPTSTGSSSSLPQS) are enriched in low complexity. An MHD domain is found at 580 to 848 (ALPIAVAFTE…FATGRYMADC (269 aa)).

The protein belongs to the FCHO family. Homodimer.

The protein localises to the membrane. Its subcellular location is the clathrin-coated pit. May function in an early step of clathrin-mediated endocytosis. In Danio rerio (Zebrafish), this protein is F-BAR domain only protein 2 (fcho2).